Reading from the N-terminus, the 380-residue chain is Forkhead box protein F1 (380 aa).

A compositionally biased stretch (polar residues) spans 1–19; it reads MTAEVQQPSVQTPAHSSPM. Residues 1–49 are disordered; it reads MTAEVQQPSVQTPAHSSPMTEKPVQTPVMETSSSSSSTKAKKTNAGIRR. The segment at residues 52-146 is a DNA-binding region (fork-head); it reads KPPYSYIALI…EEGSFRRRPR (95 aa).

It is found in the nucleus. This chain is Forkhead box protein F1 (foxf1), found in Danio rerio (Zebrafish).